The sequence spans 503 residues: ATP synthase subunit alpha (503 aa).

169–176 (GDRKTGKT) contacts ATP.

The protein belongs to the ATPase alpha/beta chains family. As to quaternary structure, F-type ATPases have 2 components, CF(1) - the catalytic core - and CF(0) - the membrane proton channel. CF(1) has five subunits: alpha(3), beta(3), gamma(1), delta(1), epsilon(1). CF(0) has three main subunits: a(1), b(2) and c(9-12). The alpha and beta chains form an alternating ring which encloses part of the gamma chain. CF(1) is attached to CF(0) by a central stalk formed by the gamma and epsilon chains, while a peripheral stalk is formed by the delta and b chains.

The protein localises to the cell membrane. It carries out the reaction ATP + H2O + 4 H(+)(in) = ADP + phosphate + 5 H(+)(out). Its function is as follows. Produces ATP from ADP in the presence of a proton gradient across the membrane. The alpha chain is a regulatory subunit. The sequence is that of ATP synthase subunit alpha from Lactobacillus delbrueckii subsp. bulgaricus (strain ATCC BAA-365 / Lb-18).